Consider the following 206-residue polypeptide: MADSEADKPLRKISAAFKKLAIIVNSPNPEVPVTQFSHACSLVSPLFGCLGIAFKFAEMDYVAKVDDLVRASSSISTLVVMMDKDIEADCVRKAGSHTRNLLRVKRGLDMVKVLFEQIIASEGDNSLKDPATKSYAQVFAPHHGWAIRKAVSLGMYALPTRAHLLNMLKEDEAAAKIHMQSYVNSSAPLITYLDNLFLSKQLGIDW.

Positions 60, 64, 99, 103, and 143 each coordinate an N-acylsphingoid base 1-phosphate.

Belongs to the GLTP family. Interacts with BPA1, PRA1F2 and PRA1F3.

It is found in the cytoplasm. Functionally, exhibits selective intermembrane transfer of ceramide-1-phosphate (C1P) and phytoceramide-1-phosphate. Does not transport ceramide (Cer) or GalCer, suggesting a requirement for phosphate in the headgroup for functionality. Transports in vitro sphingosine, but not glycosphingolipids. Also has some in vitro activity with sphingomyelin, a lipid not detected in plant tissues. The transport function may be not directly involved in regulating cell death. Rather, perturbations in the function of ACD11 or related components could be monitored by R-proteins, which then mediate defense and programmed cell death (PCD), as proposed in the guard hypothesis. C1P transfer is stimulated by phosphatidylserine in C1P source vesicles. Regulates autophagy, inflammasome mediated IL1B and IL18 processing, and pyroptosis, but not apoptosis. In Arabidopsis thaliana (Mouse-ear cress), this protein is Accelerated cell death 11.